We begin with the raw amino-acid sequence, 691 residues long: Tumor necrosis factor alpha-induced protein 2 (691 aa).

The disordered stretch occupies residues 9–111 (QGFPGQQSVP…KPRPELDGPL (103 aa)). Residues 12–31 (PGQQSVPGTLNFAVSPQKPR) show a composition bias toward polar residues. Residues 33–45 (TSEAESETSMSEA) show a composition bias toward low complexity. Basic and acidic residues predominate over residues 91–107 (QPRLSDLEVQPKPRPEL).

This sequence belongs to the SEC6 family.

Functionally, may play a role as a mediator of inflammation and angiogenesis. In Mus musculus (Mouse), this protein is Tumor necrosis factor alpha-induced protein 2 (Tnfaip2).